We begin with the raw amino-acid sequence, 307 residues long: Porphobilinogen deaminase (307 aa).

Cys239 carries the post-translational modification S-(dipyrrolylmethanemethyl)cysteine.

Belongs to the HMBS family. In terms of assembly, monomer. Dipyrromethane serves as cofactor.

The catalysed reaction is 4 porphobilinogen + H2O = hydroxymethylbilane + 4 NH4(+). It participates in porphyrin-containing compound metabolism; protoporphyrin-IX biosynthesis; coproporphyrinogen-III from 5-aminolevulinate: step 2/4. Tetrapolymerization of the monopyrrole PBG into the hydroxymethylbilane pre-uroporphyrinogen in several discrete steps. This chain is Porphobilinogen deaminase, found in Campylobacter jejuni subsp. jejuni serotype O:6 (strain 81116 / NCTC 11828).